Reading from the N-terminus, the 358-residue chain is DNA polymerase IV (358 aa).

The region spanning 6–187 (IIHIDMDYFF…LDIGDFPGVG (182 aa)) is the UmuC domain. Residues Asp10 and Asp105 each coordinate Mg(2+). Glu106 is a catalytic residue.

The protein belongs to the DNA polymerase type-Y family. In terms of assembly, monomer. It depends on Mg(2+) as a cofactor.

It localises to the cytoplasm. It catalyses the reaction DNA(n) + a 2'-deoxyribonucleoside 5'-triphosphate = DNA(n+1) + diphosphate. Functionally, poorly processive, error-prone DNA polymerase involved in untargeted mutagenesis. Copies undamaged DNA at stalled replication forks, which arise in vivo from mismatched or misaligned primer ends. These misaligned primers can be extended by PolIV. Exhibits no 3'-5' exonuclease (proofreading) activity. May be involved in translesional synthesis, in conjunction with the beta clamp from PolIII. The polypeptide is DNA polymerase IV (Staphylococcus haemolyticus (strain JCSC1435)).